We begin with the raw amino-acid sequence, 402 residues long: uncharacterized protein (402 aa).

This is an uncharacterized protein from Ostreid herpesvirus 1 (isolate France) (OsHV-1).